Consider the following 410-residue polypeptide: Pyruvate dehydrogenase complex protein X component, mitochondrial (410 aa).

The transit peptide at 1–30 (MLSAISKVSTLKSCTRYLTKCNYHASAKLL) directs the protein to the mitochondrion. Residues 32–108 (VKTFSMPAMS…DVGEPIAYIA (77 aa)) form the Lipoyl-binding domain. Lys-73 carries the post-translational modification N6-lipoyllysine. A Peripheral subunit-binding (PSBD) domain is found at 169–210 (TLLPSVSLLLAENNISKQKALKEIAPSGSNGRLLKGDVLAYL).

This sequence belongs to the 2-oxoacid dehydrogenase family. In terms of assembly, eukaryotic pyruvate dehydrogenase (PDH) complexes are organized as a core consisting of the oligomeric dihydrolipoamide acetyl-transferase (E2), around which are arranged multiple copies of pyruvate dehydrogenase (E1), dihydrolipoamide dehydrogenase (E3) and protein X (E3BP) bound by non-covalent bonds.

The protein resides in the mitochondrion matrix. Its function is as follows. Required for anchoring dihydrolipoamide dehydrogenase (E3) to the dihydrolipoamide transacetylase (E2) core of the pyruvate dehydrogenase complexes of eukaryotes. This specific binding is essential for a functional PDH complex. The polypeptide is Pyruvate dehydrogenase complex protein X component, mitochondrial (PDX1) (Saccharomyces cerevisiae (strain ATCC 204508 / S288c) (Baker's yeast)).